A 233-amino-acid polypeptide reads, in one-letter code: Putative peroxiredoxin (233 aa).

Positions 41–200 constitute a Thioredoxin domain; that stretch reads AQIGKEAPEF…TIRIVKAIQF (160 aa). Residue C87 is the Cysteine sulfenic acid (-SOH) intermediate of the active site.

The protein belongs to the peroxiredoxin family. AhpC/Prx1 subfamily. As to quaternary structure, homodimer; disulfide-linked, upon oxidation.

The protein resides in the cell membrane. The catalysed reaction is a hydroperoxide + [thioredoxin]-dithiol = an alcohol + [thioredoxin]-disulfide + H2O. Thiol-specific peroxidase that catalyzes the reduction of hydrogen peroxide and organic hydroperoxides to water and alcohols, respectively. Plays a role in cell protection against oxidative stress by detoxifying peroxides and as sensor of hydrogen peroxide-mediated signaling events. The sequence is that of Putative peroxiredoxin from Entamoeba histolytica (strain ATCC 30459 / HM-1:IMSS / ABRM).